We begin with the raw amino-acid sequence, 213 residues long: Orotidine 5'-phosphate decarboxylase (213 aa).

Residues aspartate 11, lysine 33, 61 to 70 (DLKLADIPNT), serine 113, 166 to 176 (PGVGAQGGKAS), glycine 189, and arginine 190 contribute to the substrate site. Lysine 63 serves as the catalytic Proton donor.

This sequence belongs to the OMP decarboxylase family. Type 1 subfamily. In terms of assembly, homodimer.

The enzyme catalyses orotidine 5'-phosphate + H(+) = UMP + CO2. Its pathway is pyrimidine metabolism; UMP biosynthesis via de novo pathway; UMP from orotate: step 2/2. Functionally, catalyzes the decarboxylation of orotidine 5'-monophosphate (OMP) to uridine 5'-monophosphate (UMP). The chain is Orotidine 5'-phosphate decarboxylase from Thermococcus kodakarensis (strain ATCC BAA-918 / JCM 12380 / KOD1) (Pyrococcus kodakaraensis (strain KOD1)).